The primary structure comprises 338 residues: D-erythrose-4-phosphate dehydrogenase (338 aa).

12–13 (RI) serves as a coordination point for NAD(+). Substrate contacts are provided by residues 154–156 (SCT), R200, 213–214 (TK), and R236. Residue C155 is the Nucleophile of the active site. Position 318 (N318) interacts with NAD(+).

Belongs to the glyceraldehyde-3-phosphate dehydrogenase family. Epd subfamily. As to quaternary structure, homotetramer.

Its subcellular location is the cytoplasm. It catalyses the reaction D-erythrose 4-phosphate + NAD(+) + H2O = 4-phospho-D-erythronate + NADH + 2 H(+). Its pathway is cofactor biosynthesis; pyridoxine 5'-phosphate biosynthesis; pyridoxine 5'-phosphate from D-erythrose 4-phosphate: step 1/5. Functionally, catalyzes the NAD-dependent conversion of D-erythrose 4-phosphate to 4-phosphoerythronate. This chain is D-erythrose-4-phosphate dehydrogenase, found in Yersinia enterocolitica serotype O:8 / biotype 1B (strain NCTC 13174 / 8081).